The primary structure comprises 201 residues: Thylakoid membrane protein slr1796 (201 aa).

Residues 16–36 (FLIVSLAFAMLLLGIWGTLPF) traverse the membrane as a helical segment.

The protein resides in the cellular thylakoid membrane. The polypeptide is Thylakoid membrane protein slr1796 (Synechocystis sp. (strain ATCC 27184 / PCC 6803 / Kazusa)).